We begin with the raw amino-acid sequence, 2556 residues long: Ubiquitin carboxyl-terminal hydrolase 9Y (2556 aa).

The span at 1–33 (MTITTRGSPVGENESQGQTSDGQPQPSFQQNQI) shows a compositional bias: polar residues. The tract at residues 1-68 (MTITTRGSPV…QHEEEDPSFP (68 aa)) is disordered. The span at 34–44 (SSSDSSNETSP) shows a compositional bias: low complexity. A Phosphoserine modification is found at Ser-587. Position 589 is a phosphothreonine (Thr-589). Residues 971-999 (NMPSSPDSSSDSSAGPPGNHSHNNYRDVS) are disordered. Residues 973-983 (PSSPDSSSDSS) show a composition bias toward low complexity. The USP domain maps to 1559-1958 (VGLKNAGATC…NAYILFYERM (400 aa)). Cys-1568 serves as the catalytic Nucleophile. Residues Cys-1729, His-1731, Cys-1773, and Cys-1776 each coordinate Zn(2+). His-1881 serves as the catalytic Proton acceptor. Ser-2447 is modified (phosphoserine). Residues 2513–2556 (QNYVPEQPFSGPASHHLNNPQKNDKPQETHESNEEISSCLIKDQ) are disordered. The segment covering 2534–2545 (KNDKPQETHESN) has biased composition (basic and acidic residues). Ser-2549 is modified (phosphoserine).

The protein belongs to the peptidase C19 family.

The catalysed reaction is Thiol-dependent hydrolysis of ester, thioester, amide, peptide and isopeptide bonds formed by the C-terminal Gly of ubiquitin (a 76-residue protein attached to proteins as an intracellular targeting signal).. The protein operates within protein modification; protein ubiquitination. In terms of biological role, deubiquitinase that mediates deubiquitination of target proteins. May stabilize target proteins that are important for male germ cell development. This is Ubiquitin carboxyl-terminal hydrolase 9Y from Mus musculus (Mouse).